Reading from the N-terminus, the 151-residue chain is UPF0178 protein Tcr_1995 (151 aa).

The tract at residues 116 to 135 (RSSGVDTGGPPPLNQKDRQA) is disordered.

The protein belongs to the UPF0178 family.

In Hydrogenovibrio crunogenus (strain DSM 25203 / XCL-2) (Thiomicrospira crunogena), this protein is UPF0178 protein Tcr_1995.